The primary structure comprises 370 residues: 1-propanol dehydrogenase PduQ (370 aa).

This sequence belongs to the iron-containing alcohol dehydrogenase family. As to quaternary structure, interacts with PduP, probably via the N-terminus of PduQ. Requires Fe cation as cofactor.

The protein localises to the bacterial microcompartment. The enzyme catalyses 1-propanol + NAD(+) = propanal + NADH + H(+). Its pathway is polyol metabolism; 1,2-propanediol degradation. Functionally, an iron-dependent alcohol dehydrogenase required for optimal 1,2-propanediol (1,2-PD) degradation. NAD(+) and NADH are regenerated internally within the bacterial microcompartment (BMC) dedicated to 1,2-PD degradation by the PduP and PduQ enzymes, which reduce NAD(+) and oxidize NADH respectively, although there must also be cofactor transport across the BMC. Expression of a cosmid containing the full 21-gene pdu operon in E.coli allows E.coli to grow on 1,2-propanediol (1,2-PD) with the appearance of bacterial microcompartments (BMC) in its cytoplasm. In terms of biological role, the 1,2-PD-specific bacterial microcompartment (BMC) concentrates low levels of 1,2-PD catabolic enzymes, concentrates volatile reaction intermediates thus enhancing pathway flux and keeps the level of toxic, mutagenic propionaldehyde low. The polypeptide is 1-propanol dehydrogenase PduQ (Citrobacter freundii).